Reading from the N-terminus, the 640-residue chain is F-box only protein 43 (640 aa).

T176 carries the post-translational modification Phosphothreonine. Position 275 is a phosphoserine (S275). Residues L328–Q354 form a disordered region. Residues M423–K480 enclose the F-box domain. The ZBR-type zinc-finger motif lies at A568–G616. 8 residues coordinate Zn(2+): C572, C575, C590, C595, C600, C603, H608, and C613. The interval R615 to L640 is disordered.

As to quaternary structure, part of a SCF (SKP1-cullin-F-box) protein ligase complex. Interaction with SKP1 does not occur. Interacts with ANAPC2; the interaction is direct, ANAPC4, CDC16, CDC23; the interaction is direct, ANAPC10; the interaction is direct and CDC26, during spermatogenesis. Interacts with CDC20. Phosphorylated on Thr-176 and Ser-275 in response to calcium, which is a prerequisite for ubiquitination and proteasomal degradation. In terms of processing, ubiquitinated in response to calcium, which promotes proteasomal degradation. In terms of tissue distribution, present in testis and ovary (at protein level). Expression is high in immature oocytes, and diminishes after oocyte activation. Expressed post-meiotically in spermatids and sperm.

It functions in the pathway protein modification; protein ubiquitination. Its function is as follows. Required to establish and maintain the arrest of oocytes at the second meiotic metaphase until fertilization. Acts by inhibiting the anaphase-promoting complex/cyclosome (APC/C) ubiquitin ligase. Probably recognizes and binds to some phosphorylated proteins and promotes their ubiquitination and degradation. Plays a vital role in modulating the ubiquitilation of CCNB1 and CDK1 during gametogenesis. In Mus musculus (Mouse), this protein is F-box only protein 43 (Fbxo43).